The following is a 637-amino-acid chain: DNA mismatch repair protein MutL (637 aa).

Over residues 343–352 the composition is skewed to polar residues; sequence QQSPDRQVSP. The interval 343-411 is disordered; sequence QQSPDRQVSP…SARNGDVSLP (69 aa). Residues 365–380 are compositionally biased toward basic and acidic residues; it reads SIERKPSVSYDVRDSH. A compositionally biased stretch (low complexity) spans 388-397; the sequence is YSSGSSSYRS.

This sequence belongs to the DNA mismatch repair MutL/HexB family.

Functionally, this protein is involved in the repair of mismatches in DNA. It is required for dam-dependent methyl-directed DNA mismatch repair. May act as a 'molecular matchmaker', a protein that promotes the formation of a stable complex between two or more DNA-binding proteins in an ATP-dependent manner without itself being part of a final effector complex. This chain is DNA mismatch repair protein MutL, found in Shewanella halifaxensis (strain HAW-EB4).